The chain runs to 167 residues: Small ribosomal subunit protein uS5 (167 aa).

An S5 DRBM domain is found at 11-74 (LQEKLIAVNR…EKARRNMINV (64 aa)).

Belongs to the universal ribosomal protein uS5 family. Part of the 30S ribosomal subunit. Contacts proteins S4 and S8.

With S4 and S12 plays an important role in translational accuracy. Its function is as follows. Located at the back of the 30S subunit body where it stabilizes the conformation of the head with respect to the body. In Klebsiella pneumoniae subsp. pneumoniae (strain ATCC 700721 / MGH 78578), this protein is Small ribosomal subunit protein uS5.